Here is a 496-residue protein sequence, read N- to C-terminus: Glutamyl-tRNA(Gln) amidotransferase subunit A (496 aa).

Catalysis depends on charge relay system residues lysine 75 and serine 150. The Acyl-ester intermediate role is filled by serine 174.

It belongs to the amidase family. GatA subfamily. As to quaternary structure, heterotrimer of A, B and C subunits.

The catalysed reaction is L-glutamyl-tRNA(Gln) + L-glutamine + ATP + H2O = L-glutaminyl-tRNA(Gln) + L-glutamate + ADP + phosphate + H(+). Functionally, allows the formation of correctly charged Gln-tRNA(Gln) through the transamidation of misacylated Glu-tRNA(Gln) in organisms which lack glutaminyl-tRNA synthetase. The reaction takes place in the presence of glutamine and ATP through an activated gamma-phospho-Glu-tRNA(Gln). The protein is Glutamyl-tRNA(Gln) amidotransferase subunit A of Burkholderia pseudomallei (strain 668).